A 316-amino-acid polypeptide reads, in one-letter code: Lipoyl synthase (316 aa).

Positions 66, 71, 77, 92, 96, 99, and 306 each coordinate [4Fe-4S] cluster. The 218-residue stretch at 78-295 folds into the Radical SAM core domain; sequence FNRGTATFMI…NLIAFDLGFK (218 aa).

Belongs to the radical SAM superfamily. Lipoyl synthase family. The cofactor is [4Fe-4S] cluster.

It is found in the cytoplasm. The enzyme catalyses [[Fe-S] cluster scaffold protein carrying a second [4Fe-4S](2+) cluster] + N(6)-octanoyl-L-lysyl-[protein] + 2 oxidized [2Fe-2S]-[ferredoxin] + 2 S-adenosyl-L-methionine + 4 H(+) = [[Fe-S] cluster scaffold protein] + N(6)-[(R)-dihydrolipoyl]-L-lysyl-[protein] + 4 Fe(3+) + 2 hydrogen sulfide + 2 5'-deoxyadenosine + 2 L-methionine + 2 reduced [2Fe-2S]-[ferredoxin]. It functions in the pathway protein modification; protein lipoylation via endogenous pathway; protein N(6)-(lipoyl)lysine from octanoyl-[acyl-carrier-protein]: step 2/2. Its function is as follows. Catalyzes the radical-mediated insertion of two sulfur atoms into the C-6 and C-8 positions of the octanoyl moiety bound to the lipoyl domains of lipoate-dependent enzymes, thereby converting the octanoylated domains into lipoylated derivatives. The sequence is that of Lipoyl synthase from Wigglesworthia glossinidia brevipalpis.